Consider the following 147-residue polypeptide: Putative protein adenylyltransferase MJ1305 (147 aa).

The GSX(10)DXD motif signature appears at 32-46; it reads GSYARGTAVEYSDVD. Residues Asp-44 and Asp-46 each coordinate Mg(2+).

This sequence belongs to the MntA antitoxin family. Requires Mg(2+) as cofactor.

It catalyses the reaction L-tyrosyl-[protein] + ATP = O-(5'-adenylyl)-L-tyrosyl-[protein] + diphosphate. It carries out the reaction O-(5'-adenylyl)-L-tyrosyl-[protein] + ATP = O-[5'-(adenylyl-(5'-&gt;3')-adenylyl)]-L-tyrosyl-[protein] + diphosphate. Its function is as follows. Putative antitoxin component of a putative type VII toxin-antitoxin (TA) system. Its cognate toxin might be MJ1304, which it might AMPylate. The protein is Putative protein adenylyltransferase MJ1305 of Methanocaldococcus jannaschii (strain ATCC 43067 / DSM 2661 / JAL-1 / JCM 10045 / NBRC 100440) (Methanococcus jannaschii).